A 352-amino-acid chain; its full sequence is V-type ATP synthase subunit C (352 aa).

This sequence belongs to the V-ATPase V0D/AC39 subunit family.

Its function is as follows. Produces ATP from ADP in the presence of a proton gradient across the membrane. This chain is V-type ATP synthase subunit C (atpC), found in Deinococcus radiodurans (strain ATCC 13939 / DSM 20539 / JCM 16871 / CCUG 27074 / LMG 4051 / NBRC 15346 / NCIMB 9279 / VKM B-1422 / R1).